A 339-amino-acid polypeptide reads, in one-letter code: Cathepsin B (339 aa).

The N-terminal stretch at 1-17 is a signal peptide; it reads MWWSLILLSCLLALTSA. Residues 18–79 constitute a propeptide, activation peptide; sequence HDKPSFHPLS…GRVAFGEDID (62 aa). 6 disulfide bridges follow: C93-C122, C105-C150, C141-C207, C142-C146, C179-C211, and C187-C198. Residue C108 is part of the active site. Residue N192 is glycosylated (N-linked (GlcNAc...) asparagine). N6-acetyllysine is present on K220. Active-site residues include H278 and N298. A propeptide spanning residues 334–339 is cleaved from the precursor; that stretch reads QYWGRF.

This sequence belongs to the peptidase C1 family. In terms of assembly, dimer of a heavy chain and a light chain cross-linked by a disulfide bond. Interacts with SRPX2. Directly interacts with SHKBP1. Expressed in thyroid epithelial cells.

The protein localises to the lysosome. It is found in the melanosome. The protein resides in the secreted. Its subcellular location is the extracellular space. It localises to the apical cell membrane. It catalyses the reaction Hydrolysis of proteins with broad specificity for peptide bonds. Preferentially cleaves -Arg-Arg-|-Xaa bonds in small molecule substrates (thus differing from cathepsin L). In addition to being an endopeptidase, shows peptidyl-dipeptidase activity, liberating C-terminal dipeptides.. Functionally, thiol protease which is believed to participate in intracellular degradation and turnover of proteins. Cleaves matrix extracellular phosphoglycoprotein MEPE. Involved in the solubilization of cross-linked TG/thyroglobulin in the thyroid follicle lumen. Has also been implicated in tumor invasion and metastasis. This Mus musculus (Mouse) protein is Cathepsin B (Ctsb).